The primary structure comprises 583 residues: Long-chain-fatty-acid--AMP ligase FadD26 (583 aa).

Belongs to the ATP-dependent AMP-binding enzyme family.

It catalyses the reaction holo-[(phenol)carboxyphthiodiolenone synthase] + a long-chain fatty acid + ATP = a long-chain fatty acyl-[(phenol)carboxyphthiodiolenone synthase] + AMP + diphosphate. It carries out the reaction eicosanoate + holo-[(phenol)carboxyphthiodiolenone synthase] + ATP = icosanoyl-[(phenol)carboxyphthiodiolenone synthase] + AMP + diphosphate. The enzyme catalyses holo-[(phenol)carboxyphthiodiolenone synthase] + docosanoate + ATP = docosanoyl-[(phenol)carboxyphthiodiolenone synthase] + AMP + diphosphate. It functions in the pathway lipid metabolism; fatty acid biosynthesis. In terms of biological role, catalyzes the activation of long-chain fatty acids as acyl-adenylates (acyl-AMP), which are then transferred to the multifunctional polyketide synthase PpsA for further chain extension. Catalyzes the adenylation of the long-chain fatty acids eicosanoate (C20) or docosanoate (C22), and potentially the very-long-chain fatty acid lignocerate (C24). Involved in the biosynthesis of phthiocerol dimycocerosate (DIM A) and phthiodiolone dimycocerosate (DIM B). The polypeptide is Long-chain-fatty-acid--AMP ligase FadD26 (fadD26) (Mycobacterium bovis (strain ATCC BAA-935 / AF2122/97)).